Here is a 218-residue protein sequence, read N- to C-terminus: Probable 3-keto-L-gulonate-6-phosphate decarboxylase (218 aa).

A substrate-binding site is contributed by Asp11. Mg(2+) contacts are provided by Glu33 and Asp62. Residue Arg194 participates in substrate binding.

The protein belongs to the HPS/KGPDC family. KGPDC subfamily. It depends on Mg(2+) as a cofactor.

The catalysed reaction is 3-dehydro-L-gulonate 6-phosphate + H(+) = L-xylulose 5-phosphate + CO2. It functions in the pathway cofactor degradation; L-ascorbate degradation; D-xylulose 5-phosphate from L-ascorbate: step 2/4. Functionally, catalyzes the decarboxylation of 3-keto-L-gulonate-6-P into L-xylulose-5-P. Is involved in the anaerobic L-ascorbate utilization. This chain is Probable 3-keto-L-gulonate-6-phosphate decarboxylase (ulaD), found in Mycoplasma pneumoniae (strain ATCC 29342 / M129 / Subtype 1) (Mycoplasmoides pneumoniae).